The primary structure comprises 86 residues: Exodeoxyribonuclease 7 small subunit (86 aa).

The disordered stretch occupies residues 64-86; that stretch reads SNPETVQDKTDTDEPDSNEFSLT.

It belongs to the XseB family. Heterooligomer composed of large and small subunits.

It is found in the cytoplasm. The catalysed reaction is Exonucleolytic cleavage in either 5'- to 3'- or 3'- to 5'-direction to yield nucleoside 5'-phosphates.. Its function is as follows. Bidirectionally degrades single-stranded DNA into large acid-insoluble oligonucleotides, which are then degraded further into small acid-soluble oligonucleotides. In Akkermansia muciniphila (strain ATCC BAA-835 / DSM 22959 / JCM 33894 / BCRC 81048 / CCUG 64013 / CIP 107961 / Muc), this protein is Exodeoxyribonuclease 7 small subunit.